The chain runs to 2372 residues: NBAS subunit of NRZ tethering complex (2372 aa).

2 WD repeats span residues 119–158 (DPNP…LFII) and 304–343 (GEQD…LRGS). A disordered region spans residues 447–468 (LESSVKGEEDDGDDDSDSDEEA). Residues 454–467 (EEDDGDDDSDSDEE) are compositionally biased toward acidic residues. Residues 629-668 (YEDFLSMEEELEQRKERESKKRQELLKKVDFSKLTLEQKE) are a coiled coil.

The protein resides in the endoplasmic reticulum. In terms of biological role, involved in Golgi-to-endoplasmic reticulum (ER) retrograde transport; the function is proposed to depend on its association in the NRZ complex which is believed to play a role in SNARE assembly at the ER. Required for normal embryonic development. May play a role in the nonsense-mediated decay pathway of mRNAs containing premature stop codons. The protein is NBAS subunit of NRZ tethering complex of Danio rerio (Zebrafish).